The sequence spans 359 residues: MKAAAITPGKKDSLRVIDVDRPRPGAGEVLVRMLEAGVCGTDEELNLGIIGEAPAGSDYLIIGHENLGVVEEAGKDVRAFRKGDLVVATVRRSCPGMCFACRTGQPDMCDSDDYLERGIKGMHGYMAEYYTERPENLIPVPQSLRKVAVLLEPLSIVEKGIEQAFKIQERMIWRPRRALVAGAGPIGLLAALILRDVGLEVSTFATRSRESLKARIAEAAGIEYFNVKETPIEQIAELQGPLDMIVEATGSSEIAFKAIGLTDSNGIVCLTGLSPEQRTHSVCTDCVNQDLVMHNKAVFGTVSSNRVHFERGIDRLTSIERRWPGLLERMFSRRVRLENVKEGLKGDKEDVKVLVEIGA.

Cys39 is a binding site for Zn(2+). Thr41 contributes to the substrate binding site. Residues His64 and Glu65 each coordinate Zn(2+). The substrate site is built by Glu116 and Glu152. Glu152 serves as a coordination point for Zn(2+). An NADP(+)-binding site is contributed by 183–186 (AGPI).

It belongs to the zinc-containing alcohol dehydrogenase family. Glucose 1-dehydrogenase subfamily. It depends on Zn(2+) as a cofactor.

The catalysed reaction is D-glucose + NAD(+) = D-glucono-1,5-lactone + NADH + H(+). The enzyme catalyses D-glucose + NADP(+) = D-glucono-1,5-lactone + NADPH + H(+). Its function is as follows. Catalyzes the NAD(P)(+)-dependent oxidation of D-glucose to D-gluconate via gluconolactone. Can utilize both NAD(+) and NADP(+) as electron acceptor. Is involved in the degradation of glucose through a non-phosphorylative variant of the Entner-Doudoroff pathway. In Methanocella arvoryzae (strain DSM 22066 / NBRC 105507 / MRE50), this protein is Glucose 1-dehydrogenase.